The chain runs to 146 residues: Putative ankyrin repeat protein FPV224 (146 aa).

ANK repeat units lie at residues 9 to 38 (SLST…DASI), 42 to 79 (KGIT…TRDI), 94 to 126 (YVFV…RIDE), and 127 to 145 (YYYS…KAVN).

The sequence is that of Putative ankyrin repeat protein FPV224 from Fowlpox virus (strain NVSL) (FPV).